Here is a 99-residue protein sequence, read N- to C-terminus: Putative septation protein SpoVG (99 aa).

It belongs to the SpoVG family.

Could be involved in septation. The polypeptide is Putative septation protein SpoVG (Onion yellows phytoplasma (strain OY-M)).